Consider the following 359-residue polypeptide: Peptide chain release factor 1 (359 aa).

At glutamine 235 the chain carries N5-methylglutamine. The segment at 284 to 311 is disordered; it reads KAESERSASRKNQVGSGDRSERIRTYNF.

It belongs to the prokaryotic/mitochondrial release factor family. In terms of processing, methylated by PrmC. Methylation increases the termination efficiency of RF1.

Its subcellular location is the cytoplasm. In terms of biological role, peptide chain release factor 1 directs the termination of translation in response to the peptide chain termination codons UAG and UAA. In Bartonella quintana (strain Toulouse) (Rochalimaea quintana), this protein is Peptide chain release factor 1.